The sequence spans 310 residues: Ribosomal protein L11 methyltransferase (310 aa).

Residues threonine 156, glycine 179, aspartate 201, and asparagine 246 each contribute to the S-adenosyl-L-methionine site.

Belongs to the methyltransferase superfamily. PrmA family.

The protein localises to the cytoplasm. It carries out the reaction L-lysyl-[protein] + 3 S-adenosyl-L-methionine = N(6),N(6),N(6)-trimethyl-L-lysyl-[protein] + 3 S-adenosyl-L-homocysteine + 3 H(+). Its function is as follows. Methylates ribosomal protein L11. The sequence is that of Ribosomal protein L11 methyltransferase from Desulfatibacillum aliphaticivorans.